Consider the following 248-residue polypeptide: UDP-2,3-diacylglucosamine hydrolase (248 aa).

Mn(2+) contacts are provided by aspartate 7, histidine 9, aspartate 40, asparagine 78, and histidine 113. A substrate-binding site is contributed by asparagine 78–arginine 79. Residues aspartate 121, serine 159, threonine 163, lysine 166, and histidine 194 each coordinate substrate. 2 residues coordinate Mn(2+): histidine 194 and histidine 196.

Belongs to the LpxH family. Mn(2+) serves as cofactor.

It localises to the cell inner membrane. The catalysed reaction is UDP-2-N,3-O-bis[(3R)-3-hydroxytetradecanoyl]-alpha-D-glucosamine + H2O = 2-N,3-O-bis[(3R)-3-hydroxytetradecanoyl]-alpha-D-glucosaminyl 1-phosphate + UMP + 2 H(+). Its pathway is glycolipid biosynthesis; lipid IV(A) biosynthesis; lipid IV(A) from (3R)-3-hydroxytetradecanoyl-[acyl-carrier-protein] and UDP-N-acetyl-alpha-D-glucosamine: step 4/6. Functionally, hydrolyzes the pyrophosphate bond of UDP-2,3-diacylglucosamine to yield 2,3-diacylglucosamine 1-phosphate (lipid X) and UMP by catalyzing the attack of water at the alpha-P atom. Involved in the biosynthesis of lipid A, a phosphorylated glycolipid that anchors the lipopolysaccharide to the outer membrane of the cell. The sequence is that of UDP-2,3-diacylglucosamine hydrolase from Pseudomonas syringae pv. tomato (strain ATCC BAA-871 / DC3000).